Here is a 1180-residue protein sequence, read N- to C-terminus: MNLCAQYLRQAEALKADMTDSKLGAAEVWTSRQALQDLYQKMLVTDLEYALDKKVEQDLWNHAFKNQITTLQSQAKNRANPNRSEVQANLSLFLEAASGFYTQLLQELCTVFNVDLPCRVKSSQLGIISNKQSSTSAIVKPQPSSCSYICQHCLVHLGDIARYRNQTSQAESYYRHAAQLVPSNGQPYNQLAILASSKGDHLTTIFYYCRSIAVKFPFPAASTNLQKALSKALESRDEVKTKWSVSDFIKAFIKFHGHVYLCKSLDKLNTLREKLEEQFQRLILQKAFSSQQLVHITVINLFELHHLRDLSNEADEHSYSSDEQISWIQLLGLFMSFLGVMLSRALLNKNREEIMGECPLPAIKVSLDWLRLRPTVFNESAMDKRQYIWPWLVSILNSFQPKEEDVSNASVIPLPEEFELQGFLALRPALRMLDFSKGHQGIVIGKESLLIHARHQRLISLGKWVADNQPRLIQCRMSDGLVLFITDIPEIVVEEPQEKDTPVLQESSNGEQTPNESTHGLKSVLSAGKNQNSGLDGSERPVVTFKENIKPREQSREQNRNQNQRDTGKDRAGFNKGNGVQGKNEQKKEGKRKSEVKKNSHDKTTDAGKQVKTQTELRKTPVSEARKTPVTQTQTTCSSQFIPIHHPGAFPPLPSRPGFPPPAYVIPPPVAFSMSPGFTFPTGVSVPAPFLQTASHPQSANPVQTGKPSHIPYSQQRPSGPVALNQGPPQPQQTQPPPPQTSQQALQQSVQLQLQQQQQQQQQQQQQQQQSPTKQSSQLGKSPPHHHSMQQSYMQVPEQPGQMWNQHQNQPGMQKMPMQMPVKQPFFMPTQDPMKLFEHPMSMQPQQPSMDKKMKFPEVKVQDFYWDPPYHMAGEGRSTMADRMGKRQPGVFCSDQENMPRGPPYEDNKSSPLLPPDLLKTLADFEEEEELLFTKPHDFYQALAGPLNSAPGRNMFLPNQSRLDSGADVIGQSSLLPRFSIQDNSYQNNSIFSEAYGKNMTPSSKPDAPMMHQEPSLYSLFEGNPWSPSLPASSDHSTPASQSPHSSNPSSLPSSPPTHSHGSMPFSNFGPIGTPDSRDRRANDRWKAEKTGVSGFGLDYLPSASTSSVPETNSWHQGAPTSTWAAQDMPMEDSSTVLLDSFKSIWSSSMMQPGPSALEQLLMQQKQKQQRGHGNMNPPH.

TPR repeat units lie at residues 151–184 (QHCL…VPSN) and 186–218 (QPYN…KFPF). Disordered regions lie at residues 496-636 (PQEK…TQTT), 692-795 (QTAS…SYMQ), 893-913 (CSDQ…SSPL), 1019-1127 (SLFE…WAAQ), and 1148-1180 (SSMM…NPPH). Over residues 504–520 (LQESSNGEQTPNESTHG) the composition is skewed to polar residues. Composition is skewed to basic and acidic residues over residues 547-559 (ENIK…REQN), 584-606 (NEQK…KTTD), and 615-627 (TELR…EARK). Residues 692 to 718 (QTASHPQSANPVQTGKPSHIPYSQQRP) are compositionally biased toward polar residues. The span at 728 to 740 (PPQPQQTQPPPPQ) shows a compositional bias: pro residues. A compositionally biased stretch (low complexity) spans 741–778 (TSQQALQQSVQLQLQQQQQQQQQQQQQQQQSPTKQSSQ). A compositionally biased stretch (polar residues) spans 1026–1038 (WSPSLPASSDHST). Low complexity predominate over residues 1039–1065 (PASQSPHSSNPSSLPSSPPTHSHGSMP). Residues 1076-1090 (DSRDRRANDRWKAEK) show a composition bias toward basic and acidic residues. Positions 1103-1125 (SASTSSVPETNSWHQGAPTSTWA) are enriched in polar residues.

It localises to the cytoplasm. Its subcellular location is the nucleus. Functionally, plays a role in nonsense-mediated mRNA decay. Recruits UPF1 to cytoplasmic mRNA decay bodies. Together with SMG5 is thought to provide a link to the mRNA degradation machinery involving exonucleolytic pathways, and to serve as an adapter for UPF1 to protein phosphatase 2A (PP2A), thereby triggering UPF1 dephosphorylation. Required for normal embryonic development. The chain is Nonsense-mediated mRNA decay factor SMG7 from Danio rerio (Zebrafish).